Reading from the N-terminus, the 453-residue chain is Chromosomal replication initiator protein DnaA (453 aa).

The interval 1–74 is domain I, interacts with DnaA modulators; the sequence is MKEKQFWNRI…GFEIYDAEIT (74 aa). A domain II region spans residues 74–113; the sequence is TPHYIFTKPQDTTSSQVEEATNLTLYNYSPKLVSIPYSDT. The domain III, AAA+ region stretch occupies residues 114–331; the sequence is GLKEKYTFDN…GAINDITLIA (218 aa). 4 residues coordinate ATP: G158, G160, K161, and T162. Residues 332–453 form a domain IV, binds dsDNA region; that stretch reads RVKKIKDITI…EIESIKKKIK (122 aa).

It belongs to the DnaA family. As to quaternary structure, oligomerizes as a right-handed, spiral filament on DNA at oriC.

Its subcellular location is the cytoplasm. Plays an essential role in the initiation and regulation of chromosomal replication. ATP-DnaA binds to the origin of replication (oriC) to initiate formation of the DNA replication initiation complex once per cell cycle. Binds the DnaA box (a 9 base pair repeat at the origin) and separates the double-stranded (ds)DNA. Forms a right-handed helical filament on oriC DNA; dsDNA binds to the exterior of the filament while single-stranded (ss)DNA is stabiized in the filament's interior. The ATP-DnaA-oriC complex binds and stabilizes one strand of the AT-rich DNA unwinding element (DUE), permitting loading of DNA polymerase. After initiation quickly degrades to an ADP-DnaA complex that is not apt for DNA replication. Binds acidic phospholipids. This chain is Chromosomal replication initiator protein DnaA, found in Streptococcus pneumoniae serotype 19F (strain G54).